The primary structure comprises 340 residues: Pilin (340 aa).

Residues M1 to G23 form the signal peptide. 2 consecutive cross-links (isoaspartyl lysine isopeptide (Lys-Asn)) follow at residues K36 to N168 and K179 to N303. K161 is covalently cross-linked (Threonyl lysine isopeptide (Lys-Thr) (interchain with T-311)). An EVPTG sorting signal motif is present at residues E308–G312. Position 311 is a pentaglycyl murein peptidoglycan amidated threonine; alternate (T311). A Threonyl lysine isopeptide (Thr-Lys) (interchain with K-161); alternate cross-link involves residue T311. Residues G312–A340 constitute a propeptide, removed by sortase C1.

This sequence belongs to the Streptococcus pilin family. As to quaternary structure, forms columns of about 3-nanometers in diameter of head-to-tail-assembled molecules. In terms of processing, proteolytically processed and assembled in pili through a transpeptidation reaction catalyzed by the sortase C1. The last pilin subunit is cross-linked to the peptidoglycan.

Its subcellular location is the secreted. It localises to the cell wall. It is found in the fimbrium. Major component of the pilus. A stack of the pilin subunits, joined by intermolecular isopeptide bonds, forms the pilus. The pilus is required for bacterial adhesion to host cells, for bacterial aggregation, and for biofilm formation. This chain is Pilin, found in Streptococcus pyogenes serotype M1.